We begin with the raw amino-acid sequence, 924 residues long: Periplasmic nitrate reductase (924 aa).

Residues 1-30 constitute a signal peptide (tat-type signal); it reads MNRRDFIKNTAIASAASVAGLSVPSSMLGA. One can recognise a 4Fe-4S Mo/W bis-MGD-type domain in the interval 35-91; the sequence is WKWDKAVCRFCGTGCGIMIARKDGKIVATKGDPAAPVNRGLNCIKGYFNAKIMYGED. [4Fe-4S] cluster is bound by residues Cys42, Cys45, Cys49, and Cys77. Mo-bis(molybdopterin guanine dinucleotide) contacts are provided by residues Lys79, Gln147, Asn172, Cys176, 209-216, Met417, Gln421, Asn527, 552-553, Lys575, Asp602, and 814-823; these read WGANMAEM, SD, and TGRVLEHWHS. Trp890 is a binding site for substrate. 2 residues coordinate Mo-bis(molybdopterin guanine dinucleotide): Asn898 and Lys915.

This sequence belongs to the prokaryotic molybdopterin-containing oxidoreductase family. NasA/NapA/NarB subfamily. As to quaternary structure, component of the periplasmic nitrate reductase NapAB complex composed of NapA and NapB. Requires [4Fe-4S] cluster as cofactor. Mo-bis(molybdopterin guanine dinucleotide) serves as cofactor. In terms of processing, predicted to be exported by the Tat system. The position of the signal peptide cleavage has not been experimentally proven.

The protein resides in the periplasm. The enzyme catalyses 2 Fe(II)-[cytochrome] + nitrate + 2 H(+) = 2 Fe(III)-[cytochrome] + nitrite + H2O. Functionally, catalytic subunit of the periplasmic nitrate reductase complex NapAB. Receives electrons from NapB and catalyzes the reduction of nitrate to nitrite. The protein is Periplasmic nitrate reductase of Campylobacter jejuni subsp. jejuni serotype O:6 (strain 81116 / NCTC 11828).